Reading from the N-terminus, the 175-residue chain is RNA pyrophosphohydrolase (175 aa).

The region spanning 6–149 (GYRPNVGIVI…KRDVYRRVMK (144 aa)) is the Nudix hydrolase domain. A Nudix box motif is present at residues 38-59 (GGINAGETAEQAMYRELFEEVG).

It belongs to the Nudix hydrolase family. RppH subfamily. Requires a divalent metal cation as cofactor.

Accelerates the degradation of transcripts by removing pyrophosphate from the 5'-end of triphosphorylated RNA, leading to a more labile monophosphorylated state that can stimulate subsequent ribonuclease cleavage. This is RNA pyrophosphohydrolase from Sodalis glossinidius (strain morsitans).